The primary structure comprises 256 residues: Floral homeotic protein APETALA 1 (256 aa).

The 61-residue stretch at 1–61 (MGRGRVQLKR…GKLFEYSTDP (61 aa)) folds into the MADS-box domain. One can recognise a K-box domain in the interval 88–178 (NTNWSMEYNR…SKQIKERENV (91 aa)). The interval 187 to 206 (DEQNHGHNMPPPPPPQQHQI) is disordered.

In terms of assembly, homodimer capable of binding to CArG-box sequences.

It localises to the nucleus. Transcription factor that promotes early floral meristem identity in synergy with LEAFY. Displays a redundant function with CAULIFLOWER in the up-regulation of LEAFY. Required subsequently for the transition of an inflorescence meristem into a floral meristem, and for the normal development of sepals and petals in flowers. Regulates positively B class homeotic proteins. This is Floral homeotic protein APETALA 1 (AP1) from Brassica oleracea (Wild cabbage).